A 291-amino-acid chain; its full sequence is MAPSNLPPVFNATSQDIEMLLAAQCHLGSKNLQVHMEPYLWKTRPDGINVINIGKTWEKIVLAARIIAAIDNPADICVISARPYGQRAVLKFAAHTGAVAIAGRFTPGSFTNYITRSFKEPRLIIVTDPRTDSQAIKEASYVNIPVIALCDTDSPTEFVDVAIPTNNKGRHAIGLVWWLLAREVLRLRGTLANRETEWDVVVDLYFYRDPEAEEAKELEEAKAPGVEEIGAAAVETGFGAEGWEAAGGSAFAAAASTTAPPNWEATGGDWATSTAPAEGWAGDAPAGETKW.

The disordered stretch occupies residues serine 256–tryptophan 291.

This sequence belongs to the universal ribosomal protein uS2 family. As to quaternary structure, component of the small ribosomal subunit. Mature ribosomes consist of a small (40S) and a large (60S) subunit. The 40S subunit contains about 33 different proteins and 1 molecule of RNA (18S). The 60S subunit contains about 49 different proteins and 3 molecules of RNA (25S, 5.8S and 5S). Interacts with RPS21.

It is found in the cytoplasm. Functionally, required for the assembly and/or stability of the 40S ribosomal subunit. Required for the processing of the 20S rRNA-precursor to mature 18S rRNA in a late step of the maturation of 40S ribosomal subunits. This is Small ribosomal subunit protein uS2 from Coccidioides immitis (strain RS) (Valley fever fungus).